Here is a 615-residue protein sequence, read N- to C-terminus: Dihydroxy-acid dehydratase (615 aa).

Mg(2+) is bound at residue aspartate 81. Cysteine 122 is a [2Fe-2S] cluster binding site. Mg(2+) contacts are provided by aspartate 123 and lysine 124. N6-carboxylysine is present on lysine 124. Cysteine 193 is a [2Fe-2S] cluster binding site. Glutamate 489 is a binding site for Mg(2+). Serine 515 serves as the catalytic Proton acceptor.

The protein belongs to the IlvD/Edd family. In terms of assembly, homodimer. [2Fe-2S] cluster is required as a cofactor. Requires Mg(2+) as cofactor.

The enzyme catalyses (2R)-2,3-dihydroxy-3-methylbutanoate = 3-methyl-2-oxobutanoate + H2O. The catalysed reaction is (2R,3R)-2,3-dihydroxy-3-methylpentanoate = (S)-3-methyl-2-oxopentanoate + H2O. It participates in amino-acid biosynthesis; L-isoleucine biosynthesis; L-isoleucine from 2-oxobutanoate: step 3/4. It functions in the pathway amino-acid biosynthesis; L-valine biosynthesis; L-valine from pyruvate: step 3/4. Its function is as follows. Functions in the biosynthesis of branched-chain amino acids. Catalyzes the dehydration of (2R,3R)-2,3-dihydroxy-3-methylpentanoate (2,3-dihydroxy-3-methylvalerate) into 2-oxo-3-methylpentanoate (2-oxo-3-methylvalerate) and of (2R)-2,3-dihydroxy-3-methylbutanoate (2,3-dihydroxyisovalerate) into 2-oxo-3-methylbutanoate (2-oxoisovalerate), the penultimate precursor to L-isoleucine and L-valine, respectively. In Pseudomonas syringae pv. syringae (strain B728a), this protein is Dihydroxy-acid dehydratase.